Consider the following 218-residue polypeptide: Riboflavin kinase (218 aa).

A disordered region spans residues 1–27; that stretch reads MRPDGPRDPVAGPDSGPEPPYPVRLSG. Mg(2+) is bound by residues Thr-44 and Asn-46. The active-site Nucleophile is Glu-120.

This sequence belongs to the flavokinase family. Zn(2+) serves as cofactor. It depends on Mg(2+) as a cofactor.

It carries out the reaction riboflavin + ATP = FMN + ADP + H(+). It participates in cofactor biosynthesis; FMN biosynthesis; FMN from riboflavin (ATP route): step 1/1. Its function is as follows. Catalyzes the phosphorylation of riboflavin (vitamin B2) to form flavin mononucleotide (FMN) coenzyme. This Neosartorya fischeri (strain ATCC 1020 / DSM 3700 / CBS 544.65 / FGSC A1164 / JCM 1740 / NRRL 181 / WB 181) (Aspergillus fischerianus) protein is Riboflavin kinase (fmn1).